The chain runs to 160 residues: Cyclic pyranopterin monophosphate synthase (160 aa).

Substrate-binding positions include 76–78 (LCH) and 114–115 (ME). The active site involves aspartate 129.

This sequence belongs to the MoaC family. In terms of assembly, homohexamer; trimer of dimers.

The enzyme catalyses (8S)-3',8-cyclo-7,8-dihydroguanosine 5'-triphosphate = cyclic pyranopterin phosphate + diphosphate. It participates in cofactor biosynthesis; molybdopterin biosynthesis. In terms of biological role, catalyzes the conversion of (8S)-3',8-cyclo-7,8-dihydroguanosine 5'-triphosphate to cyclic pyranopterin monophosphate (cPMP). The sequence is that of Cyclic pyranopterin monophosphate synthase from Saccharophagus degradans (strain 2-40 / ATCC 43961 / DSM 17024).